The following is a 740-amino-acid chain: Elongation factor 2 (740 aa).

Positions 23–264 constitute a tr-type G domain; the sequence is AQIRNAGTLA…MIIEHIPPPN (242 aa). GTP contacts are provided by residues 32–39, 98–102, and 152–155; these read AHVDHGKT, DTPGH, and NKID. At H605 the chain carries Diphthamide.

The protein belongs to the TRAFAC class translation factor GTPase superfamily. Classic translation factor GTPase family. EF-G/EF-2 subfamily.

The protein localises to the cytoplasm. Catalyzes the GTP-dependent ribosomal translocation step during translation elongation. During this step, the ribosome changes from the pre-translocational (PRE) to the post-translocational (POST) state as the newly formed A-site-bound peptidyl-tRNA and P-site-bound deacylated tRNA move to the P and E sites, respectively. Catalyzes the coordinated movement of the two tRNA molecules, the mRNA and conformational changes in the ribosome. The chain is Elongation factor 2 from Pyrobaculum aerophilum (strain ATCC 51768 / DSM 7523 / JCM 9630 / CIP 104966 / NBRC 100827 / IM2).